Consider the following 396-residue polypeptide: Glideosome-associated protein 50 (396 aa).

The Lumenal segment spans residues 1–369 (MNYCKTTFHI…PMGNKDTFVR (369 aa)). The a metal cation site is built by histidine 195 and histidine 256. Residues 370 to 390 (VVGTIGILIGSVIVFIGASSF) traverse the membrane as a helical segment. Over 391-396 (LSKNMK) the chain is Cytoplasmic.

The protein belongs to the metallophosphoesterase superfamily. Purple acid phosphatase family. As to quaternary structure, component of the glideosome complex composed of GAP50, GAP45, MTIP and MyoA; the complex is formed during the late schizont stage and in merozoites. MyoA, MTIP and GAP45 probably form an initial complex in the cytoplasm which is then recruited to the outer face of the inner membrane complex via the interaction with GAP50. Interacts with GAP45; the interaction is independent of GAP45 phosphorylation status and can also occur independently of the formation of the glideosome complex. Interacts with human factor H isoform CFH (via sushi 6-7 domains) and isoform FHL-1 (via sushi 6-7 domains); the interaction occurs in the vector mosquito midgut at the surface of activated gametocytes; the interaction protects the parasite from alternative complement pathway-mediated elimination. It depends on a metal cation as a cofactor. Post-translationally, the N-terminus signal is likely to be cleaved.

It localises to the inner membrane complex. The protein localises to the cell membrane. It is found in the endoplasmic reticulum membrane. It catalyses the reaction a phosphate monoester + H2O = an alcohol + phosphate. With respect to regulation, activity is independent of metal ions. Its function is as follows. Component of the glideosome complex, an inner membrane complex structure involved in parasite gliding motility and host cell invasion. During the asexual blood stage, may play a role in the assembly and anchoring of the glideosome complex to the inner membrane complex. During the sexual stage in the vector mosquito midgut, protects gametocytes against host alternative complement pathway-mediated elimination by interacting with host complement inhibitor factor H. Has phosphatase activity towards nucleotides such as ATP, vitamins B1 and B6, phosphorylated sugars, glycerol phosphates and inositol triphosphates. However, the phosphatase activity is controversial. This is Glideosome-associated protein 50 from Plasmodium falciparum (isolate 3D7).